The following is a 252-amino-acid chain: MLIFVGLGLYDLDDISLKGLQAIKEADAVFLETYTSVLTGTTIEQMREKYGKDLIILKRQDVEQKPEPILTAAKNGIAVFLTGGDPMVSTTHADLRIRAHEQGIPTKIIHGSSIVSAVSGLTGLQNYRFGKSCSIPYPAPKWFPKTPLDTILANLKQNLHTIVYLDIQENRYMSVHEGIELLEKLMEGSTDSIPLFVGIARAGSNSPVVAAGSSERLKLVDFGPPLHILVVPASLHEIEEEYLKNFAGYDPQ.

S-adenosyl-L-methionine contacts are provided by residues Leu9, Asp85, Val88, 113–114, Leu165, Ala202, and His227; that span reads SI.

The protein belongs to the diphthine synthase family. As to quaternary structure, homodimer.

The enzyme catalyses 2-[(3S)-amino-3-carboxypropyl]-L-histidyl-[translation elongation factor 2] + 3 S-adenosyl-L-methionine = diphthine-[translation elongation factor 2] + 3 S-adenosyl-L-homocysteine + 3 H(+). It participates in protein modification; peptidyl-diphthamide biosynthesis. Functionally, S-adenosyl-L-methionine-dependent methyltransferase that catalyzes the trimethylation of the amino group of the modified target histidine residue in translation elongation factor 2 (EF-2), to form an intermediate called diphthine. The three successive methylation reactions represent the second step of diphthamide biosynthesis. The polypeptide is Diphthine synthase (Methanospirillum hungatei JF-1 (strain ATCC 27890 / DSM 864 / NBRC 100397 / JF-1)).